We begin with the raw amino-acid sequence, 180 residues long: Large ribosomal subunit protein uL5c (180 aa).

Belongs to the universal ribosomal protein uL5 family. As to quaternary structure, part of the 50S ribosomal subunit; contacts the 5S rRNA.

The protein resides in the plastid. It is found in the chloroplast. Its function is as follows. Binds 5S rRNA, forms part of the central protuberance of the 50S subunit. The chain is Large ribosomal subunit protein uL5c (rpl5) from Stigeoclonium helveticum (Green alga).